The chain runs to 207 residues: dTTP/UTP pyrophosphatase (207 aa).

The active-site Proton acceptor is Asp86.

It belongs to the Maf family. YhdE subfamily. It depends on a divalent metal cation as a cofactor.

It is found in the cytoplasm. It carries out the reaction dTTP + H2O = dTMP + diphosphate + H(+). It catalyses the reaction UTP + H2O = UMP + diphosphate + H(+). Its function is as follows. Nucleoside triphosphate pyrophosphatase that hydrolyzes dTTP and UTP. May have a dual role in cell division arrest and in preventing the incorporation of modified nucleotides into cellular nucleic acids. The protein is dTTP/UTP pyrophosphatase of Nitrosospira multiformis (strain ATCC 25196 / NCIMB 11849 / C 71).